Consider the following 820-residue polypeptide: Nuclear pore complex protein Nup93 (820 aa).

The protein belongs to the nucleoporin interacting component (NIC) family.

It is found in the nucleus membrane. It localises to the nucleus. Its subcellular location is the nuclear pore complex. In terms of biological role, plays a role in the nuclear pore complex (NPC) assembly and/or maintenance. In Danio rerio (Zebrafish), this protein is Nuclear pore complex protein Nup93 (dye).